Here is a 472-residue protein sequence, read N- to C-terminus: UDP-glycosyltransferase 2 (472 aa).

Residues Ser283, 348–349 (WA), 366–374 (HCGWNSVLE), and 388–391 (YAEQ) each bind UDP-alpha-D-glucose.

It belongs to the UDP-glycosyltransferase family. As to expression, highly expressed in roots. Expressed in leaves and stems.

In terms of biological role, glycosyltransferase that possesses isoflavonoids 4'-O- and 7-O-glucosyltransferase activities. Shows a successive glucosylation toward the acceptors producing their corresponding 4',7-O-diglucosides. Can use genistein, formononetin, daidzein, liquiritigenin and naringenin as substrates. Also shows a 3'-O-glucosylation activity in vitro. In Pueraria montana var. lobata (Kudzu vine), this protein is UDP-glycosyltransferase 2.